The following is a 103-amino-acid chain: Large ribosomal subunit protein bL21 (103 aa).

This sequence belongs to the bacterial ribosomal protein bL21 family. As to quaternary structure, part of the 50S ribosomal subunit. Contacts protein L20.

Its function is as follows. This protein binds to 23S rRNA in the presence of protein L20. The protein is Large ribosomal subunit protein bL21 of Marinobacter nauticus (strain ATCC 700491 / DSM 11845 / VT8) (Marinobacter aquaeolei).